A 335-amino-acid polypeptide reads, in one-letter code: Probable peptide ABC transporter ATP-binding protein y4tR (335 aa).

One can recognise an ABC transporter domain in the interval 15 to 264 (VRDLETHFYG…PTHPYTRALM (250 aa)). 49 to 56 (GESGCGKS) is a binding site for ATP.

The protein belongs to the ABC transporter superfamily.

The protein resides in the cell inner membrane. Functionally, probably part of a binding-protein-dependent transport system y4tOPQRS for a peptide. Probably responsible for energy coupling to the transport system. This Sinorhizobium fredii (strain NBRC 101917 / NGR234) protein is Probable peptide ABC transporter ATP-binding protein y4tR.